Here is a 453-residue protein sequence, read N- to C-terminus: uncharacterized protein (453 aa).

An N-terminal signal peptide occupies residues 1–23 (MFLLQRFFIYGLFLACFYTTVFG). Residues 24 to 137 (EKHFEAEEYR…EKQFSYSSGT (114 aa)) lie on the Lumenal side of the membrane. The chain crosses the membrane as a helical span at residues 138-158 (NGILATFLTAIPPNIFILLVP). Over 159 to 165 (KSFDTSM) the chain is Cytoplasmic. A helical transmembrane segment spans residues 166 to 186 (LNLFVAVSAGSLLGDVFLQLL). At 187 to 194 (PTVYSTNG) the chain is on the lumenal side. Residues 195 to 215 (GDFPASSVYSILIGALVFFLM) traverse the membrane as a helical segment. Over 216–358 (DKGIRILIHE…LRNGYTKSQV (143 aa)) the chain is Cytoplasmic. Residues 229–238 (SLSKPKKDGE) show a composition bias toward basic and acidic residues. The disordered stretch occupies residues 229 to 278 (SLSKPKKDGEETSSVNKPSASSTQTDVKGVEGLRKRNVKDDQNSKGHEPD). Over residues 240-254 (TSSVNKPSASSTQTD) the composition is skewed to polar residues. A compositionally biased stretch (basic and acidic residues) spans 256 to 278 (KGVEGLRKRNVKDDQNSKGHEPD). The chain crosses the membrane as a helical span at residues 359–379 (LVLQMITMVTGLLGAIVATYI). The Lumenal portion of the chain corresponds to 380-399 (YTASSSSSPYGSFLLQLEDK). A helical membrane pass occupies residues 400 to 420 (LLPFTAGGFLYIAYLGVFPEL). Residues 421–432 (LEINLSKGKLGN) lie on the Cytoplasmic side of the membrane. The helical transmembrane segment at 433 to 453 (MIYTALYMMFIVGGFSFLYYV) threads the bilayer.

Belongs to the ZIP transporter (TC 2.A.5) family. KE4/Catsup subfamily.

It localises to the endoplasmic reticulum membrane. This is an uncharacterized protein from Schizosaccharomyces pombe (strain 972 / ATCC 24843) (Fission yeast).